We begin with the raw amino-acid sequence, 232 residues long: MGKLTKNQKLAAEKIEAGKAYSLKEAASLVKEITFTKFDASLDIDVRLGVDPRKANQMVRGVVSLPHGTGKEVRVLVLCTPDAEAAAKEAGADYVGLDEYIEKIKGGWTDIDVIITMPSIMGKIGALGRVLGPRGLMPNPKSGTVTMDVAKAVKEVKQGKIDFKVDKSGIVHTSIGKVSFSPDQIRDNAKEFISTLNKLKPTAAKGTYIKSIYLSSTMSAGIKIDPKSVDEI.

The protein belongs to the universal ribosomal protein uL1 family. As to quaternary structure, part of the 50S ribosomal subunit.

In terms of biological role, binds directly to 23S rRNA. The L1 stalk is quite mobile in the ribosome, and is involved in E site tRNA release. Functionally, protein L1 is also a translational repressor protein, it controls the translation of the L11 operon by binding to its mRNA. This Bacteroides thetaiotaomicron (strain ATCC 29148 / DSM 2079 / JCM 5827 / CCUG 10774 / NCTC 10582 / VPI-5482 / E50) protein is Large ribosomal subunit protein uL1.